The following is a 180-amino-acid chain: MKQLLDFLPLVVFFIFYKMYDIFVASGALIVATLVALAFTWLKYRKVEKMTLVTAAMVLVFGTLTLAFHSDLFIKWKVTVLYVLFALALLVSQWVMKKPLIQRMLGKELTLPDKVWSTLNLSWAIFFLVCGLLNIYVAFWLPQDIWVNFKVFGLTALTLIFTLISGVYIYRHMPEEQKKS.

The next 5 helical transmembrane spans lie at 22–42 (IFVA…FTWL), 50–70 (MTLV…AFHS), 72–92 (LFIK…LLVS), 121–141 (LSWA…AFWL), and 149–169 (FKVF…GVYI).

Belongs to the YciB family.

The protein resides in the cell inner membrane. Functionally, plays a role in cell envelope biogenesis, maintenance of cell envelope integrity and membrane homeostasis. The protein is Inner membrane-spanning protein YciB of Yersinia pseudotuberculosis serotype O:1b (strain IP 31758).